Here is a 91-residue protein sequence, read N- to C-terminus: Small ribosomal subunit protein uS15 (91 aa).

This sequence belongs to the universal ribosomal protein uS15 family. Part of the 30S ribosomal subunit. Forms a bridge to the 50S subunit in the 70S ribosome, contacting the 23S rRNA.

In terms of biological role, one of the primary rRNA binding proteins, it binds directly to 16S rRNA where it helps nucleate assembly of the platform of the 30S subunit by binding and bridging several RNA helices of the 16S rRNA. Its function is as follows. Forms an intersubunit bridge (bridge B4) with the 23S rRNA of the 50S subunit in the ribosome. The protein is Small ribosomal subunit protein uS15 of Synechococcus sp. (strain JA-3-3Ab) (Cyanobacteria bacterium Yellowstone A-Prime).